The primary structure comprises 748 residues: Polyribonucleotide nucleotidyltransferase (748 aa).

Mg(2+) contacts are provided by Asp-487 and Asp-493. The KH domain maps to 554–613 (PSTTTIKIDKDKIRDIIGPGGKVIKEICETSGAKIDISDDGTVSVYASDRDKLKVALDKI). The region spanning 623–691 (GEIFNGTVVK…NKGKAKLTIK (69 aa)) is the S1 motif domain. The segment at 691 to 748 (KNADKDKSSNNTKPKTNVNNTKDNSEPEQRRDSSKKRAWNEDNNAETAEVITERKYFN) is disordered. Low complexity predominate over residues 699-712 (SNNTKPKTNVNNTK). The span at 713 to 722 (DNSEPEQRRD) shows a compositional bias: basic and acidic residues.

It belongs to the polyribonucleotide nucleotidyltransferase family. The cofactor is Mg(2+).

It localises to the cytoplasm. It catalyses the reaction RNA(n+1) + phosphate = RNA(n) + a ribonucleoside 5'-diphosphate. In terms of biological role, involved in mRNA degradation. Catalyzes the phosphorolysis of single-stranded polyribonucleotides processively in the 3'- to 5'-direction. In Rickettsia africae (strain ESF-5), this protein is Polyribonucleotide nucleotidyltransferase.